The chain runs to 208 residues: NAD(P)H-hydrate epimerase (208 aa).

In terms of domain architecture, YjeF N-terminal spans 11 to 208 (MRAKDQFTIN…VIVADDMGTY (198 aa)). 59–63 (NNGGD) is a binding site for (6S)-NADPHX. Positions 60 and 122 each coordinate K(+). (6S)-NADPHX is bound by residues 126-132 (GIGIDRP), Tyr137, and Asp155. Ser158 provides a ligand contact to K(+).

Belongs to the NnrE/AIBP family. K(+) is required as a cofactor.

The enzyme catalyses (6R)-NADHX = (6S)-NADHX. The catalysed reaction is (6R)-NADPHX = (6S)-NADPHX. In terms of biological role, catalyzes the epimerization of the S- and R-forms of NAD(P)HX, a damaged form of NAD(P)H that is a result of enzymatic or heat-dependent hydration. This is a prerequisite for the S-specific NAD(P)H-hydrate dehydratase to allow the repair of both epimers of NAD(P)HX. The sequence is that of NAD(P)H-hydrate epimerase from Limosilactobacillus fermentum (strain NBRC 3956 / LMG 18251) (Lactobacillus fermentum).